A 92-amino-acid chain; its full sequence is Small ribosomal subunit protein uS19 (92 aa).

It belongs to the universal ribosomal protein uS19 family.

In terms of biological role, protein S19 forms a complex with S13 that binds strongly to the 16S ribosomal RNA. The chain is Small ribosomal subunit protein uS19 from Corynebacterium urealyticum (strain ATCC 43042 / DSM 7109).